Here is a 230-residue protein sequence, read N- to C-terminus: uncharacterized protein (230 aa).

2 disordered regions span residues 63–90 (TDCQ…KKTI) and 194–230 (KKLE…YKEH). Basic and acidic residues predominate over residues 194–217 (KKLEEREQMDKHPQDRDNKDKEVN).

This is an uncharacterized protein from Caenorhabditis elegans.